The chain runs to 546 residues: Chaperonin GroEL 2 (546 aa).

ATP contacts are provided by residues 30-33, K51, 87-91, G415, 479-481, and D495; these read TLGP, DGTTT, and NAA.

This sequence belongs to the chaperonin (HSP60) family. In terms of assembly, forms a cylinder of 14 subunits composed of two heptameric rings stacked back-to-back. Interacts with the co-chaperonin GroES.

The protein resides in the cytoplasm. The catalysed reaction is ATP + H2O + a folded polypeptide = ADP + phosphate + an unfolded polypeptide.. Its function is as follows. Together with its co-chaperonin GroES, plays an essential role in assisting protein folding. The GroEL-GroES system forms a nano-cage that allows encapsulation of the non-native substrate proteins and provides a physical environment optimized to promote and accelerate protein folding. This is Chaperonin GroEL 2 from Chromobacterium violaceum (strain ATCC 12472 / DSM 30191 / JCM 1249 / CCUG 213 / NBRC 12614 / NCIMB 9131 / NCTC 9757 / MK).